The chain runs to 155 residues: 6,7-dimethyl-8-ribityllumazine synthase (155 aa).

5-amino-6-(D-ribitylamino)uracil-binding positions include phenylalanine 22, 56–58, and 80–82; these read AFE and AVI. 85-86 lines the (2S)-2-hydroxy-3-oxobutyl phosphate pocket; it reads NT. Residue histidine 88 is the Proton donor of the active site. Phenylalanine 113 provides a ligand contact to 5-amino-6-(D-ribitylamino)uracil. Arginine 127 contacts (2S)-2-hydroxy-3-oxobutyl phosphate.

The protein belongs to the DMRL synthase family.

It carries out the reaction (2S)-2-hydroxy-3-oxobutyl phosphate + 5-amino-6-(D-ribitylamino)uracil = 6,7-dimethyl-8-(1-D-ribityl)lumazine + phosphate + 2 H2O + H(+). Its pathway is cofactor biosynthesis; riboflavin biosynthesis; riboflavin from 2-hydroxy-3-oxobutyl phosphate and 5-amino-6-(D-ribitylamino)uracil: step 1/2. In terms of biological role, catalyzes the formation of 6,7-dimethyl-8-ribityllumazine by condensation of 5-amino-6-(D-ribitylamino)uracil with 3,4-dihydroxy-2-butanone 4-phosphate. This is the penultimate step in the biosynthesis of riboflavin. The polypeptide is 6,7-dimethyl-8-ribityllumazine synthase (Streptococcus pneumoniae serotype 2 (strain D39 / NCTC 7466)).